The sequence spans 290 residues: Tubulin beta-4B chain (290 aa).

The MREI motif signature appears at M1 to I4. Residue Q11 participates in GTP binding. T55 bears the Phosphothreonine mark. K58 is modified (N6-acetyllysine). Positions 69, 138, 142, 143, 144, and 172 each coordinate GTP. A Mg(2+)-binding site is contributed by E69.

It belongs to the tubulin family. Dimer of alpha and beta chains. A typical microtubule is a hollow water-filled tube with an outer diameter of 25 nm and an inner diameter of 15 nM. Alpha-beta heterodimers associate head-to-tail to form protofilaments running lengthwise along the microtubule wall with the beta-tubulin subunit facing the microtubule plus end conferring a structural polarity. Microtubules usually have 13 protofilaments but different protofilament numbers can be found in some organisms and specialized cells. Component of sperm flagellar doublet microtubules. Mg(2+) is required as a cofactor. Post-translationally, some glutamate residues at the C-terminus are polyglycylated, resulting in polyglycine chains on the gamma-carboxyl group. Glycylation is mainly limited to tubulin incorporated into axonemes (cilia and flagella) whereas glutamylation is prevalent in neuronal cells, centrioles, axonemes, and the mitotic spindle. Both modifications can coexist on the same protein on adjacent residues, and lowering polyglycylation levels increases polyglutamylation, and reciprocally. Cilia and flagella glycylation is required for their stability and maintenance. Flagella glycylation controls sperm motility. In terms of processing, some glutamate residues at the C-terminus are polyglutamylated, resulting in polyglutamate chains on the gamma-carboxyl group. Polyglutamylation plays a key role in microtubule severing by spastin (SPAST). SPAST preferentially recognizes and acts on microtubules decorated with short polyglutamate tails: severing activity by SPAST increases as the number of glutamates per tubulin rises from one to eight, but decreases beyond this glutamylation threshold. Glutamylation is also involved in cilia motility.

The protein resides in the cytoplasm. Its subcellular location is the cytoskeleton. The protein localises to the flagellum axoneme. Its function is as follows. Tubulin is the major constituent of microtubules, a cylinder consisting of laterally associated linear protofilaments composed of alpha- and beta-tubulin heterodimers. Microtubules grow by the addition of GTP-tubulin dimers to the microtubule end, where a stabilizing cap forms. Below the cap, tubulin dimers are in GDP-bound state, owing to GTPase activity of alpha-tubulin. This chain is Tubulin beta-4B chain (TUBB4B), found in Mesocricetus auratus (Golden hamster).